Consider the following 208-residue polypeptide: Uridine kinase (208 aa).

Gly12–Thr19 serves as a coordination point for ATP.

It belongs to the uridine kinase family.

The protein localises to the cytoplasm. The catalysed reaction is uridine + ATP = UMP + ADP + H(+). The enzyme catalyses cytidine + ATP = CMP + ADP + H(+). It functions in the pathway pyrimidine metabolism; CTP biosynthesis via salvage pathway; CTP from cytidine: step 1/3. The protein operates within pyrimidine metabolism; UMP biosynthesis via salvage pathway; UMP from uridine: step 1/1. The polypeptide is Uridine kinase (Streptococcus pyogenes serotype M18 (strain MGAS8232)).